We begin with the raw amino-acid sequence, 158 residues long: Large ribosomal subunit protein uL11 (158 aa).

The interval 1–28 (MAGTIEALVPGGQATPGPPLGPELGPTP) is disordered.

It belongs to the universal ribosomal protein uL11 family. Part of the ribosomal stalk of the 50S ribosomal subunit. Interacts with L10 and the large rRNA to form the base of the stalk. L10 forms an elongated spine to which L12 dimers bind in a sequential fashion forming a multimeric L10(L12)X complex.

Forms part of the ribosomal stalk which helps the ribosome interact with GTP-bound translation factors. This chain is Large ribosomal subunit protein uL11, found in Halorubrum lacusprofundi (strain ATCC 49239 / DSM 5036 / JCM 8891 / ACAM 34).